The chain runs to 370 residues: Chloromuconate cycloisomerase (370 aa).

Catalysis depends on lysine 165, which acts as the Proton acceptor. The Mn(2+) site is built by aspartate 194, glutamate 220, and aspartate 245. The active-site Proton donor is glutamate 323.

It belongs to the mandelate racemase/muconate lactonizing enzyme family. The cofactor is Mn(2+).

The catalysed reaction is 2-[(2R)-2-chloro-2,5-dihydro-5-oxofuryl]acetate = 3-chloro-cis,cis-muconate + H(+). It functions in the pathway aromatic compound metabolism; 3-chlorocatechol degradation. The polypeptide is Chloromuconate cycloisomerase (tfdD) (Delftia acidovorans (Pseudomonas acidovorans)).